Reading from the N-terminus, the 225-residue chain is Endonuclease V (225 aa).

Aspartate 43 and aspartate 110 together coordinate Mg(2+). Interaction with target DNA regions lie at residues 139 to 141 and 214 to 221; these read KSR and HIYTQRLK.

The protein belongs to the endonuclease V family. Requires Mg(2+) as cofactor.

It localises to the cytoplasm. It catalyses the reaction Endonucleolytic cleavage at apurinic or apyrimidinic sites to products with a 5'-phosphate.. Functionally, DNA repair enzyme involved in the repair of deaminated bases. Selectively cleaves double-stranded DNA at the second phosphodiester bond 3' to a deoxyinosine leaving behind the intact lesion on the nicked DNA. In vitro, can also cleave single-stranded substrates with inosine, double-stranded DNA with apurinic sites, or DNA sites with uracil or a mismatched base. When present in molar excess, two protein molecules can bind to the same DNA substrate and effect cleavage of both strands (in vitro). The sequence is that of Endonuclease V from Thermotoga maritima (strain ATCC 43589 / DSM 3109 / JCM 10099 / NBRC 100826 / MSB8).